We begin with the raw amino-acid sequence, 202 residues long: Regulator of G-protein signaling 16 (202 aa).

S-palmitoyl cysteine attachment occurs at residues C2 and C12. Positions 65–181 constitute an RGS domain; sequence SFDLLLSSKN…LKSPAYRDLA (117 aa). Position 168 is a phosphotyrosine; by EGFR (Y168). Phosphotyrosine is present on Y177.

In terms of assembly, interacts with GNAI1 and GNAQ. Interacts with GNAI2, GNAI3 and GNAO1. Post-translationally, palmitoylated on Cys-2 and/or Cys-12. In terms of processing, phosphorylated. Phosphorylation at Tyr-168 by EGFR enhances GTPase accelerating (GAP) activity toward GNAI1. In terms of tissue distribution, abundantly expressed in retina with lower levels of expression in most other tissues.

The protein localises to the membrane. In terms of biological role, regulates G protein-coupled receptor signaling cascades. Inhibits signal transduction by increasing the GTPase activity of G protein alpha subunits, thereby driving them into their inactive GDP-bound form. Plays an important role in the phototransduction cascade by regulating the lifetime and effective concentration of activated transducin alpha. May regulate extra and intracellular mitogenic signals. This chain is Regulator of G-protein signaling 16 (RGS16), found in Homo sapiens (Human).